A 238-amino-acid polypeptide reads, in one-letter code: Tetrahydromethanopterin S-methyltransferase subunit A 1 (238 aa).

Over 2 to 218 (VEKKSPAEGW…RMFAGMYSGK (217 aa)) the chain is Cytoplasmic. Residue His84 coordinates 5-hydroxybenzimidazolylcob(I)amide. The chain crosses the membrane as a helical span at residues 219-237 (VQGIMIGLAFTLTLGILLL). Residue Val238 is a topological domain, extracellular.

The protein belongs to the MtrA family. In terms of assembly, the complex is composed of 8 subunits; MtrA, MtrB, MtrC, MtrD, MtrE, MtrF, MtrG and MtrH. 5-hydroxybenzimidazolylcob(I)amide serves as cofactor.

It localises to the cell membrane. It catalyses the reaction 5-methyl-5,6,7,8-tetrahydromethanopterin + coenzyme M + 2 Na(+)(in) = 5,6,7,8-tetrahydromethanopterin + methyl-coenzyme M + 2 Na(+)(out). Its pathway is one-carbon metabolism; methanogenesis from CO(2); methyl-coenzyme M from 5,10-methylene-5,6,7,8-tetrahydromethanopterin: step 2/2. Part of a complex that catalyzes the formation of methyl-coenzyme M and tetrahydromethanopterin from coenzyme M and methyl-tetrahydromethanopterin. This is an energy-conserving, sodium-ion translocating step. The chain is Tetrahydromethanopterin S-methyltransferase subunit A 1 from Methanothermobacter marburgensis (strain ATCC BAA-927 / DSM 2133 / JCM 14651 / NBRC 100331 / OCM 82 / Marburg) (Methanobacterium thermoautotrophicum).